A 215-amino-acid polypeptide reads, in one-letter code: MRVRYKPWAEDYLKNHPDLVDMDGAHAGKMSEWFEKEQPIYIEIGSGMGQFITTLAAQYPEINFVSMEREKSVMYKVLDKTKEMGLKNLKMICNDAIELNEYFKDKEISRIYLNFSDPWPKKRHAKRRLTYHTYLALYKQILKDDGEIHFKTDNRGLFAFSIESMSQFGMYFTKMNLNLHDEDDEDNIVTEYEKKFSEKGSRIYRMEAKFHKCFE.

Residues Glu-43, Glu-68, Asp-95, and Asp-117 each coordinate S-adenosyl-L-methionine. Asp-117 is a catalytic residue. Residues Lys-121, Asp-153, and 190 to 193 contribute to the substrate site; that span reads TEYE.

It belongs to the class I-like SAM-binding methyltransferase superfamily. TrmB family.

It carries out the reaction guanosine(46) in tRNA + S-adenosyl-L-methionine = N(7)-methylguanosine(46) in tRNA + S-adenosyl-L-homocysteine. The protein operates within tRNA modification; N(7)-methylguanine-tRNA biosynthesis. In terms of biological role, catalyzes the formation of N(7)-methylguanine at position 46 (m7G46) in tRNA. The sequence is that of tRNA (guanine-N(7)-)-methyltransferase from Staphylococcus epidermidis (strain ATCC 35984 / DSM 28319 / BCRC 17069 / CCUG 31568 / BM 3577 / RP62A).